Here is a 202-residue protein sequence, read N- to C-terminus: Probable GTP-binding protein EngB (202 aa).

In terms of domain architecture, EngB-type G spans 26 to 200 (VSKEIAFTGS…KAQLDSWFSI (175 aa)). GTP-binding positions include 34 to 41 (GSSNVGKS), 61 to 65 (GSTKT), 79 to 82 (DLPG), 146 to 149 (NKAD), and 179 to 181 (FSS). The Mg(2+) site is built by Ser41 and Thr63.

Belongs to the TRAFAC class TrmE-Era-EngA-EngB-Septin-like GTPase superfamily. EngB GTPase family. It depends on Mg(2+) as a cofactor.

In terms of biological role, necessary for normal cell division and for the maintenance of normal septation. This is Probable GTP-binding protein EngB from Baumannia cicadellinicola subsp. Homalodisca coagulata.